Reading from the N-terminus, the 593-residue chain is Inactive metallocarboxypeptidase ECM14 (593 aa).

An N-terminal signal peptide occupies residues 1–22 (MHVTVQLSLLLSLASSLPLVSA). Residues 23–175 (IPQHDGQAYT…QAIYESYPKN (153 aa)) constitute a propeptide that is removed on maturation. Disordered regions lie at residues 75 to 98 (VPQRGKDSETKTGKQSEAASKAPA) and 172 to 202 (YPKNNPSSPSHPGATTRRFSPSASTPESQPH). Residues 78–88 (RGKDSETKTGK) are compositionally biased toward basic and acidic residues. Residues 188 to 199 (RRFSPSASTPES) are compositionally biased toward polar residues. A Peptidase M14 domain is found at 211 to 537 (DYQPLSVLLP…HAVVAMGKFL (327 aa)). Residues His-276 and Glu-279 each contribute to the Zn(2+) site. Substrate-binding positions include 276–279 (HARE), Arg-334, and 351–352 (DR). Residues Cys-345 and Cys-368 are joined by a disulfide bond. The N-linked (GlcNAc...) asparagine glycan is linked to Asn-361. Position 408 (His-408) interacts with Zn(2+). 409 to 410 (SY) lines the substrate pocket. The segment at 548–593 (DEPHAGEQTQDNSYDEDGDNLFRAQGGDPQVRFTRRNIGAHDDDSE) is disordered.

The protein belongs to the peptidase M14 family. It depends on Zn(2+) as a cofactor.

It is found in the vacuole. It localises to the secreted. In terms of biological role, inactive carboxypeptidase that may play a role in cell wall organization and biogenesis. The chain is Inactive metallocarboxypeptidase ECM14 (ECM14) from Arthroderma otae (strain ATCC MYA-4605 / CBS 113480) (Microsporum canis).